A 297-amino-acid chain; its full sequence is Small ribosomal subunit protein uS2 (297 aa).

Over residues 263–289 (AAPTSWEADGGDWAASSAAPAGESWAE) the composition is skewed to low complexity. Residues 263–297 (AAPTSWEADGGDWAASSAAPAGESWAETQPAEAKW) form a disordered region.

It belongs to the universal ribosomal protein uS2 family. As to quaternary structure, component of the small ribosomal subunit. Mature ribosomes consist of a small (40S) and a large (60S) subunit. The 40S subunit contains about 33 different proteins and 1 molecule of RNA (18S). The 60S subunit contains about 49 different proteins and 3 molecules of RNA (25S, 5.8S and 5S). Interacts with rps21.

It is found in the cytoplasm. Functionally, required for the assembly and/or stability of the 40S ribosomal subunit. Required for the processing of the 20S rRNA-precursor to mature 18S rRNA in a late step of the maturation of 40S ribosomal subunits. This Neosartorya fischeri (strain ATCC 1020 / DSM 3700 / CBS 544.65 / FGSC A1164 / JCM 1740 / NRRL 181 / WB 181) (Aspergillus fischerianus) protein is Small ribosomal subunit protein uS2 (rps0).